A 588-amino-acid chain; its full sequence is Neopullulanase (588 aa).

Ca(2+) is bound by residues asparagine 147, asparagine 149, serine 153, glycine 172, and aspartate 174. Substrate is bound by residues histidine 247 and arginine 326. The active-site Nucleophile is the aspartate 328. Glutamate 357 serves as the catalytic Proton donor. Residues histidine 423 to aspartate 424, aspartate 468, and arginine 472 contribute to the substrate site.

This sequence belongs to the glycosyl hydrolase 13 family. Homodimer. Requires Ca(2+) as cofactor.

The catalysed reaction is Hydrolysis of pullulan to panose (6-alpha-D-glucosylmaltose).. In terms of biological role, hydrolyzes pullulan efficiently but only a small amount of starch. Endohydrolysis of 1,4-alpha-glucosidic linkages in pullulan to form panose. Also cleaves (1-6)-alpha-glucosidic linkages to form maltotriose. This chain is Neopullulanase (nplT), found in Geobacillus stearothermophilus (Bacillus stearothermophilus).